Here is a 189-residue protein sequence, read N- to C-terminus: Cytidylate kinase (189 aa).

Residue 7-15 participates in ATP binding; sequence GPPGSGKTS.

It belongs to the cytidylate kinase family. Type 2 subfamily.

It is found in the cytoplasm. The enzyme catalyses CMP + ATP = CDP + ADP. It catalyses the reaction dCMP + ATP = dCDP + ADP. The sequence is that of Cytidylate kinase from Saccharolobus islandicus (strain Y.N.15.51 / Yellowstone #2) (Sulfolobus islandicus).